Consider the following 364-residue polypeptide: Flagellar P-ring protein (364 aa).

Residues 1–21 (MNVFKVFCLMVLLGWQLPAMA) form the signal peptide.

This sequence belongs to the FlgI family. As to quaternary structure, the basal body constitutes a major portion of the flagellar organelle and consists of four rings (L,P,S, and M) mounted on a central rod.

Its subcellular location is the periplasm. The protein resides in the bacterial flagellum basal body. In terms of biological role, assembles around the rod to form the L-ring and probably protects the motor/basal body from shearing forces during rotation. The polypeptide is Flagellar P-ring protein (Pseudoalteromonas translucida (strain TAC 125)).